Consider the following 257-residue polypeptide: Zinc import ATP-binding protein ZnuC (257 aa).

The ABC transporter domain maps to 6 to 221 (IRLEQVGVSF…PAFVELFGQN (216 aa)). 38-45 (GPNGAGKT) is an ATP binding site.

The protein belongs to the ABC transporter superfamily. Zinc importer (TC 3.A.1.15.5) family. The complex is composed of two ATP-binding proteins (ZnuC), two transmembrane proteins (ZnuB) and a solute-binding protein (ZnuA).

It localises to the cell inner membrane. The catalysed reaction is Zn(2+)(out) + ATP(in) + H2O(in) = Zn(2+)(in) + ADP(in) + phosphate(in) + H(+)(in). Functionally, part of the ABC transporter complex ZnuABC involved in zinc import. Responsible for energy coupling to the transport system. This Pseudomonas entomophila (strain L48) protein is Zinc import ATP-binding protein ZnuC.